We begin with the raw amino-acid sequence, 292 residues long: Ribosomal protein L11 methyltransferase (292 aa).

S-adenosyl-L-methionine-binding residues include T143, G164, D186, and N228.

Belongs to the methyltransferase superfamily. PrmA family.

It localises to the cytoplasm. The catalysed reaction is L-lysyl-[protein] + 3 S-adenosyl-L-methionine = N(6),N(6),N(6)-trimethyl-L-lysyl-[protein] + 3 S-adenosyl-L-homocysteine + 3 H(+). Its function is as follows. Methylates ribosomal protein L11. The sequence is that of Ribosomal protein L11 methyltransferase from Aeromonas hydrophila subsp. hydrophila (strain ATCC 7966 / DSM 30187 / BCRC 13018 / CCUG 14551 / JCM 1027 / KCTC 2358 / NCIMB 9240 / NCTC 8049).